A 234-amino-acid polypeptide reads, in one-letter code: Large ribosomal subunit protein uL1 (234 aa).

The protein belongs to the universal ribosomal protein uL1 family. In terms of assembly, part of the 50S ribosomal subunit.

Its function is as follows. Binds directly to 23S rRNA. The L1 stalk is quite mobile in the ribosome, and is involved in E site tRNA release. Functionally, protein L1 is also a translational repressor protein, it controls the translation of the L11 operon by binding to its mRNA. This is Large ribosomal subunit protein uL1 from Pectobacterium carotovorum subsp. carotovorum (strain PC1).